We begin with the raw amino-acid sequence, 170 residues long: Protein-export protein SecB (170 aa).

Belongs to the SecB family. As to quaternary structure, homotetramer, a dimer of dimers. One homotetramer interacts with 1 SecA dimer.

It localises to the cytoplasm. Functionally, one of the proteins required for the normal export of preproteins out of the cell cytoplasm. It is a molecular chaperone that binds to a subset of precursor proteins, maintaining them in a translocation-competent state. It also specifically binds to its receptor SecA. The polypeptide is Protein-export protein SecB (Pasteurella multocida (strain Pm70)).